An 83-amino-acid chain; its full sequence is Disintegrin isoform D-2 (83 aa).

One can recognise a Disintegrin domain in the interval Pro2–His83. 7 cysteine pairs are disulfide-bonded: Cys5–Cys24, Cys16–Cys34, Cys18–Cys29, Cys28–Cys51, Cys42–Cys48, Cys47–Cys72, and Cys60–Cys79. A Cell attachment site motif is present at residues Arg64–Asp66.

It belongs to the venom metalloproteinase (M12B) family. P-II subfamily. P-IIa sub-subfamily. In terms of assembly, monomer (disintegrin). Expressed by the venom gland.

Its subcellular location is the secreted. In terms of biological role, inhibits fibrinogen interaction with platelets. Acts by binding to the alpha-IIb/beta-3 (ITGA2B/ITGB3) on the platelet surface and inhibits aggregation induced by ADP, thrombin, platelet-activating factor and collagen. The chain is Disintegrin isoform D-2 from Bitis arietans (African puff adder).